The following is a 122-amino-acid chain: Ribosome-binding factor A (122 aa).

The protein belongs to the RbfA family. Monomer. Binds 30S ribosomal subunits, but not 50S ribosomal subunits or 70S ribosomes.

The protein localises to the cytoplasm. One of several proteins that assist in the late maturation steps of the functional core of the 30S ribosomal subunit. Associates with free 30S ribosomal subunits (but not with 30S subunits that are part of 70S ribosomes or polysomes). Required for efficient processing of 16S rRNA. May interact with the 5'-terminal helix region of 16S rRNA. In Moorella thermoacetica (strain ATCC 39073 / JCM 9320), this protein is Ribosome-binding factor A.